A 123-amino-acid chain; its full sequence is Small ribosomal subunit protein uS12 (123 aa).

Position 89 is a 3-methylthioaspartic acid (Asp-89). The disordered stretch occupies residues 104 to 123 (TAGVQDRRQGRSKYGAKRPK). Residues 113–123 (GRSKYGAKRPK) are compositionally biased toward basic residues.

This sequence belongs to the universal ribosomal protein uS12 family. As to quaternary structure, part of the 30S ribosomal subunit. Contacts proteins S8 and S17. May interact with IF1 in the 30S initiation complex.

Functionally, with S4 and S5 plays an important role in translational accuracy. In terms of biological role, interacts with and stabilizes bases of the 16S rRNA that are involved in tRNA selection in the A site and with the mRNA backbone. Located at the interface of the 30S and 50S subunits, it traverses the body of the 30S subunit contacting proteins on the other side and probably holding the rRNA structure together. The combined cluster of proteins S8, S12 and S17 appears to hold together the shoulder and platform of the 30S subunit. The chain is Small ribosomal subunit protein uS12 from Oleidesulfovibrio alaskensis (strain ATCC BAA-1058 / DSM 17464 / G20) (Desulfovibrio alaskensis).